Reading from the N-terminus, the 1620-residue chain is Putative zinc carboxypeptidase (1620 aa).

The Extracellular portion of the chain corresponds to 1–1367 (MLFKNEDSGN…SYDFLYFDEN (1367 aa)). Asparagine 19 carries an N-linked (GlcNAc...) asparagine glycan. Residues 32–74 (RNDNKNNDNEDNKQDDEEKNDEDDNKSNLLLEENEENKRQGDK) are disordered. Residues 33–43 (NDNKNNDNEDN) are compositionally biased toward basic and acidic residues. Over residues 44–55 (KQDDEEKNDEDD) the composition is skewed to acidic residues. Asparagine 56 and asparagine 102 each carry an N-linked (GlcNAc...) asparagine glycan. A disordered region spans residues 309–328 (GNHYDAHESTNTYDEEKTRE). N-linked (GlcNAc...) asparagine glycosylation is found at asparagine 354, asparagine 487, asparagine 508, asparagine 529, asparagine 550, asparagine 571, asparagine 589, asparagine 687, asparagine 802, and asparagine 1010. The possible malaria epitope stretch occupies residues 497–559 (VNNLDSTVNY…NSTGNNINNI (63 aa)). The 258-residue stretch at 1004–1261 (GENKKNNGTK…FYVQNYFEGY (258 aa)) folds into the Peptidase M14 domain. Zn(2+) is bound by residues histidine 1059 and glutamate 1062. Residues asparagine 1064 and asparagine 1141 are each glycosylated (N-linked (GlcNAc...) asparagine). Residue histidine 1155 coordinates Zn(2+). Glutamate 1229 (proton donor/acceptor) is an active-site residue. Residues 1279–1329 (NIKGDDNINGDDNIKGGDNIKGDDNIKRDDNFQRDDNFQRDDNFQRGDNFH) form a disordered region. Residues 1368 to 1388 (LLFMTGVSFGICLFKFINFLS) traverse the membrane as a helical segment. The Cytoplasmic portion of the chain corresponds to 1389-1620 (YHKSSICRRT…SKRKKVIVIL (232 aa)). The disordered stretch occupies residues 1560–1620 (PNGKYKGPGF…SKRKKVIVIL (61 aa)). Residues 1581 to 1597 (NKNESKTEKKSKTENKS) are compositionally biased toward basic and acidic residues. Positions 1598 to 1620 (KSKSKNKSKSKNKSKRKKVIVIL) are enriched in basic residues.

Belongs to the peptidase M14 family. Zn(2+) is required as a cofactor.

Its subcellular location is the membrane. This chain is Putative zinc carboxypeptidase, found in Plasmodium falciparum (isolate 3D7).